Reading from the N-terminus, the 341-residue chain is BZIP domain-containing transcription factor BZP4 (341 aa).

Composition is skewed to polar residues over residues 1-32 (MESS…PTNE), 61-76 (LTES…SHSL), 128-139 (PLTSHSRSQITH), and 150-163 (YSSS…SPVS). 2 disordered regions span residues 1–95 (MESS…PHGM) and 118–254 (TNHS…DKKQ). Residues 178–192 (SPSSSSFPSSIPRTP) are compositionally biased toward low complexity. 2 stretches are compositionally biased toward basic and acidic residues: residues 225-234 (TGDRKHEKDS) and 242-254 (EEYK…DKKQ). Residues 250–269 (KDKKQVRNRIGARRFRAKRK) form a basic motif region. The bZIP domain occupies 250-308 (KDKKQVRNRIGARRFRAKRKDYVNQLEAGIRLRDDEITNLQSQLESQRNEINELRLQLK). Positions 279–307 (IRLRDDEITNLQSQLESQRNEINELRLQL) are leucine-zipper.

Belongs to the bZIP family.

Its subcellular location is the nucleus. It is found in the cytoplasm. Transcription factor that promotes the production of melanin, a pigment that serves as antioxidant, reactive oxygen species (ROS) scavenger and that protect fungal pathogens from radiation and host immune responses. This Cryptococcus neoformans var. grubii serotype A (strain H99 / ATCC 208821 / CBS 10515 / FGSC 9487) (Filobasidiella neoformans var. grubii) protein is BZIP domain-containing transcription factor BZP4.